The chain runs to 502 residues: Bone morphogenetic protein receptor type-1B (502 aa).

Residues 1-13 form the signal peptide; sequence MLLRSSGKLNVGT. The tract at residues 1-24 is disordered; the sequence is MLLRSSGKLNVGTKKEDGESTAPT. Residues 14-126 are Extracellular-facing; sequence KKEDGESTAP…DFVDGPIHHK (113 aa). 5 disulfides stabilise this stretch: C32–C53, C34–C38, C47–C71, C81–C95, and C96–C102. A helical transmembrane segment spans residues 127-148; it reads ALLISVTVCSLLLVLIILFCYF. At 149–502 the chain is on the cytoplasmic side; sequence RYKRQEARPR…KMSESQDIKL (354 aa). The GS domain maps to 174-203; sequence ESLRDLIEQSQSSGSGSGLPLLVQRTIAKQ. The Protein kinase domain maps to 204-494; sequence IQMVKQIGKG…LRVKKTLAKM (291 aa). Residues 210 to 218 and K231 each bind ATP; that span reads IGKGRYGEV. D332 serves as the catalytic Proton acceptor.

This sequence belongs to the protein kinase superfamily. TKL Ser/Thr protein kinase family. TGFB receptor subfamily. As to quaternary structure, interacts with high affinity with GDF5; positively regulates chondrocyte differentiation. Interacts with SCUBE3. Interacts with TSC22D1/TSC-22. Interacts with TGFBR3. Mg(2+) is required as a cofactor. It depends on Mn(2+) as a cofactor. Autophosphorylated.

The protein localises to the cell membrane. The catalysed reaction is L-threonyl-[receptor-protein] + ATP = O-phospho-L-threonyl-[receptor-protein] + ADP + H(+). It carries out the reaction L-seryl-[receptor-protein] + ATP = O-phospho-L-seryl-[receptor-protein] + ADP + H(+). Functionally, on ligand binding, forms a receptor complex consisting of two type II and two type I transmembrane serine/threonine kinases. Type II receptors phosphorylate and activate type I receptors which autophosphorylate, then bind and activate SMAD transcriptional regulators. Receptor for BMP7/OP-1. Receptor for GDF5. Positively regulates chondrocyte differentiation through GDF5 interaction. This is Bone morphogenetic protein receptor type-1B (Bmpr1b) from Mus musculus (Mouse).